The following is a 121-amino-acid chain: Large ribosomal subunit protein bL12 (121 aa).

This sequence belongs to the bacterial ribosomal protein bL12 family. Homodimer. Part of the ribosomal stalk of the 50S ribosomal subunit. Forms a multimeric L10(L12)X complex, where L10 forms an elongated spine to which 2 to 4 L12 dimers bind in a sequential fashion. Binds GTP-bound translation factors.

Its function is as follows. Forms part of the ribosomal stalk which helps the ribosome interact with GTP-bound translation factors. Is thus essential for accurate translation. The chain is Large ribosomal subunit protein bL12 from Pseudomonas fluorescens (strain SBW25).